Reading from the N-terminus, the 446-residue chain is Oxysterols receptor LXR-beta (446 aa).

The span at 1-28 shows a compositional bias: low complexity; sequence MSSPTSSLDTPLPGNGSPQPSTSSTSPT. The segment at 1–69 is disordered; the sequence is MSSPTSSLDT…PERKRKKGPA (69 aa). The tract at residues 1 to 76 is transactivation AF-1; required for ligand-independent transactivation function; the sequence is MSSPTSSLDT…GPAPKMLGHE (76 aa). Residues 75-152 constitute a DNA-binding region (nuclear receptor); that stretch reads HELCRVCGDK…AGMREQCVLS (78 aa). NR C4-type zinc fingers lie at residues 78-98 and 116-140; these read CRVCGDKASGFHYNVLSCEGC and CRGSGTCQMDAFMRRKCQLCRLRKC. Residues 160 to 201 are disordered; it reads KIQKQQQQQPPPPTEPASGSSARPAASPGTSEASSQGSGEGE. The span at 175 to 196 shows a compositional bias: low complexity; that stretch reads PASGSSARPAASPGTSEASSQG. Positions 205–446 are transactivation AF-2; required for ligand-dependent transactivation function; mediates interaction with CCAR2; it reads LTAAQELMIQ…LLSEIWDVHE (242 aa). The region spanning 208 to 446 is the NR LBD domain; it reads AQELMIQQLV…LLSEIWDVHE (239 aa). Residues Lys-395 and Lys-433 each participate in a glycyl lysine isopeptide (Lys-Gly) (interchain with G-Cter in SUMO2) cross-link.

The protein belongs to the nuclear hormone receptor family. NR1 subfamily. As to quaternary structure, forms a heterodimer with RXR. Interacts with CCAR2 (via N-terminus) in a ligand-independent manner. Interacts (when sumoylated) with GPS2; interaction with GPS2 onto hepatic acute phase protein promoters prevents N-Cor corepressor complex dissociation. Interacts with ABCA12 and ABCA1; this interaction is required for ABCA1 localization to the cell surface and is necessary for its normal activity and stability. Sumoylated by SUMO2 at Lys-395 and Lys-433 during the hepatic acute phase response, leading to promote interaction with GPS2 and prevent N-Cor corepressor complex dissociation.

The protein localises to the nucleus. Its function is as follows. Nuclear receptor that exhibits a ligand-dependent transcriptional activation activity. Binds preferentially to double-stranded oligonucleotide direct repeats having the consensus half-site sequence 5'-AGGTCA-3' and 4-nt spacing (DR-4). Regulates cholesterol uptake through MYLIP-dependent ubiquitination of LDLR, VLDLR and LRP8; DLDLR and LRP8. Interplays functionally with RORA for the regulation of genes involved in liver metabolism. Induces LPCAT3-dependent phospholipid remodeling in endoplasmic reticulum (ER) membranes of hepatocytes, driving SREBF1 processing and lipogenesis. Via LPCAT3, triggers the incorporation of arachidonate into phosphatidylcholines of ER membranes, increasing membrane dynamics and enabling triacylglycerols transfer to nascent very low-density lipoprotein (VLDL) particles. Via LPCAT3 also counteracts lipid-induced ER stress response and inflammation, likely by modulating SRC kinase membrane compartmentalization and limiting the synthesis of lipid inflammatory mediators. Plays an anti-inflammatory role during the hepatic acute phase response by acting as a corepressor: inhibits the hepatic acute phase response by preventing dissociation of the N-Cor corepressor complex. The sequence is that of Oxysterols receptor LXR-beta (Nr1h2) from Rattus norvegicus (Rat).